Consider the following 204-residue polypeptide: Nicotine blue oxidoreductase (204 aa).

Homotetramer. It depends on FMN as a cofactor.

The enzyme catalyses 3,3'-bipyridine-2,2',5,5',6,6'-hexol + NADP(+) = (E)-2,2',5,5'-tetrahydroxy-6H,6'H-(3,3'-bipyridinylidene)-6,6'-dione + NADPH + 3 H(+). It carries out the reaction 3,3'-bipyridine-2,2',5,5',6,6'-hexol + NAD(+) = (E)-2,2',5,5'-tetrahydroxy-6H,6'H-(3,3'-bipyridinylidene)-6,6'-dione + NADH + 3 H(+). The protein operates within alkaloid degradation; nicotine degradation. Its function is as follows. Catalyzes the reduction of nicotine blue to its hydroquinone form. Nicotine blue is the name given to the compound formed by the autocatalytic condensation of two molecules of 2,3,6-trihydroxypyridine, an intermediate in the nicotine degradation pathway. May play a role in preventing the intracellular formation of nicotine blue semiquinone radicals, which by redox cycling would lead to the formation of toxic reactive oxygen species. Besides nicotine blue, several other quinones are reduced by nboR. This is Nicotine blue oxidoreductase (nboR) from Paenarthrobacter nicotinovorans (Arthrobacter nicotinovorans).